Consider the following 197-residue polypeptide: Putative double homeobox protein 3 (197 aa).

2 DNA-binding regions (homeobox) span residues 46-105 and 121-180; these read GRRM…LRQH and GRRK…WGQS. A disordered region spans residues 102 to 127; that stretch reads LRQHRRQSRPWPGRRDPQKGRRKRTA.

Belongs to the paired homeobox family. In terms of tissue distribution, expressed in hepatoma Hep3B cells.

The protein localises to the nucleus. This chain is Putative double homeobox protein 3 (DUX3), found in Homo sapiens (Human).